A 156-amino-acid polypeptide reads, in one-letter code: MKKYYLIVLISFLIFYLSIFLAPYFAYLGETSNFWKFISICLYAVYSLICHQMPQRSFFIFGHKMAVCARCFGIYTGVLVGMIIYPFIKKLDDFKIPNKWYLIIALIPMAVDGTTQLIGLRESFNELRFITGFIAGFTVVFYILPIFFEMIYKKFK.

The next 5 membrane-spanning stretches (helical) occupy residues 6 to 26 (LIVL…PYFA), 34 to 54 (FWKF…HQMP), 68 to 88 (CARC…YPFI), 100 to 120 (WYLI…LIGL), and 129 to 149 (FITG…IFFE).

The protein localises to the cell membrane. This is an uncharacterized protein from Methanocaldococcus jannaschii (strain ATCC 43067 / DSM 2661 / JAL-1 / JCM 10045 / NBRC 100440) (Methanococcus jannaschii).